Here is a 345-residue protein sequence, read N- to C-terminus: Platelet-derived growth factor C (345 aa).

The signal sequence occupies residues 1–22; it reads MLLLGLLLLTSALAGRRHGAAA. Positions 46–163 constitute a CUB domain; the sequence is HEKIITVTSN…PGFCIHYTLL (118 aa). The N-linked (GlcNAc...) asparagine glycan is linked to Asn-55. 4 cysteine pairs are disulfide-bonded: Cys-104-Cys-124, Cys-250-Cys-294, Cys-280-Cys-335, and Cys-287-Cys-337.

Belongs to the PDGF/VEGF growth factor family. As to quaternary structure, homodimer; disulfide-linked. Interacts with PDGFRA homodimers, and with heterodimers formed by PDGFRA and PDGFRB. Proteolytic removal of the N-terminal CUB domain releasing the core domain is necessary for unmasking the receptor-binding epitopes of the core domain. Cleavage after basic residues in the hinge region (region connecting the CUB and growth factor domains) gives rise to the receptor-binding form.

The protein localises to the secreted. Its function is as follows. Growth factor that plays an essential role in the regulation of embryonic development, cell proliferation, cell migration, survival and chemotaxis. Potent mitogen and chemoattractant for cells of mesenchymal origin. Required for normal skeleton formation during embryonic development. Required for normal skin morphogenesis during embryonic development. Plays an important role in wound healing, in angiogenesis and blood vessel development. This is Platelet-derived growth factor C (PDGFC) from Gallus gallus (Chicken).